Here is a 200-residue protein sequence, read N- to C-terminus: uncharacterized protein (200 aa).

The tract at residues 1-21 (MSNSAQRDARNSRDESARASD) is disordered. The segment covering 7–21 (RDARNSRDESARASD) has biased composition (basic and acidic residues).

This is an uncharacterized protein from Mycobacterium tuberculosis (strain CDC 1551 / Oshkosh).